We begin with the raw amino-acid sequence, 142 residues long: Arginine decarboxylase proenzyme (142 aa).

S81 acts as the Schiff-base intermediate with substrate; via pyruvic acid in catalysis. S81 is subject to Pyruvic acid (Ser); by autocatalysis. H86 (proton acceptor; for processing activity) is an active-site residue. C101 serves as the catalytic Proton donor; for catalytic activity.

The protein belongs to the prokaryotic AdoMetDC family. Type 1 subfamily. In terms of assembly, heterooctamer of four alpha and four beta chains arranged as a tetramer of alpha/beta heterodimers. It depends on pyruvate as a cofactor. In terms of processing, is synthesized initially as an inactive proenzyme. Formation of the active enzyme involves a self-maturation process in which the active site pyruvoyl group is generated from an internal serine residue via an autocatalytic post-translational modification. Two non-identical subunits are generated from the proenzyme in this reaction, and the pyruvate is formed at the N-terminus of the alpha chain, which is derived from the carboxyl end of the proenzyme. The post-translation cleavage follows an unusual pathway, termed non-hydrolytic serinolysis, in which the side chain hydroxyl group of the serine supplies its oxygen atom to form the C-terminus of the beta chain, while the remainder of the serine residue undergoes an oxidative deamination to produce ammonia and the pyruvoyl group blocking the N-terminus of the alpha chain.

It catalyses the reaction L-arginine + H(+) = agmatine + CO2. It participates in amine and polyamine biosynthesis; agmatine biosynthesis; agmatine from L-arginine: step 1/1. In terms of biological role, specifically catalyzes the decarboxylation of L-arginine to agmatine. Has no S-adenosylmethionine decarboxylase (AdoMetDC) activity. The protein is Arginine decarboxylase proenzyme of Hyperthermus butylicus (strain DSM 5456 / JCM 9403 / PLM1-5).